The following is a 126-amino-acid chain: Fluoride-specific ion channel FluC (126 aa).

Helical transmembrane passes span 7–27 (LWLALGGAVGAVCRQAAVLLL), 36–56 (FPAAVLLINVLGSFLLGLTLA), 74–94 (GVLGAFTTFSTFSTELDGLLL), and 98–118 (GGLALAYAALSVGLGLTAAVA). Positions 77 and 80 each coordinate Na(+).

It belongs to the fluoride channel Fluc/FEX (TC 1.A.43) family.

The protein localises to the cell membrane. The enzyme catalyses fluoride(in) = fluoride(out). With respect to regulation, na(+) is not transported, but it plays an essential structural role and its presence is essential for fluoride channel function. Its function is as follows. Fluoride-specific ion channel. Important for reducing fluoride concentration in the cell, thus reducing its toxicity. This is Fluoride-specific ion channel FluC from Deinococcus radiodurans (strain ATCC 13939 / DSM 20539 / JCM 16871 / CCUG 27074 / LMG 4051 / NBRC 15346 / NCIMB 9279 / VKM B-1422 / R1).